The following is a 601-amino-acid chain: Kelch repeat and BTB domain-containing protein 8 (601 aa).

A disordered region spans residues 1–25 (MAASADLSKSSPTPNGIPSSDPASD). Residues 7-22 (LSKSSPTPNGIPSSDP) are compositionally biased toward polar residues. In terms of domain architecture, BTB spans 49 to 117 (TDIVVEVDHG…AYTSRVILTE (69 aa)). In terms of domain architecture, BACK spans 153-252 (IGVFIFADHY…PLMEDTFIEK (100 aa)). 5 Kelch repeats span residues 336 to 390 (DIYI…YCCG), 391 to 441 (KMYA…EYKE), 443 to 481 (IYVL…VYKD), 483 to 532 (IYYI…LFQN), and 542 to 588 (QVTV…FECA).

This sequence belongs to the KBTBD8 family. As to quaternary structure, component of the BCR(KBTBD8) E3 ubiquitin ligase complex, at least composed of CUL3, KBTBD8 and RBX1.

It is found in the cytoplasm. The protein resides in the cytoskeleton. Its subcellular location is the spindle. It localises to the golgi apparatus. In terms of biological role, substrate-specific adapter of a BCR (BTB-CUL3-RBX1) E3 ubiquitin ligase complex that acts as a regulator of neural crest specification. The BCR(KBTBD8) complex acts by mediating monoubiquitination of NOLC1 and TCOF1: monoubiquitination promotes the formation of a NOLC1-TCOF1 complex that acts as a platform to connect RNA polymerase I with enzymes responsible for ribosomal processing and modification, leading to remodel the translational program of differentiating cells in favor of neural crest specification. This is Kelch repeat and BTB domain-containing protein 8 (KBTBD8) from Homo sapiens (Human).